We begin with the raw amino-acid sequence, 220 residues long: Adenylate kinase (220 aa).

13 to 18 (GAGKGT) contributes to the ATP binding site. The segment at 33-62 (ATGDMLRSQVARQTELGKEAKKIMDQGGLV) is NMP. AMP contacts are provided by residues Thr34, Arg39, 60-62 (GLV), 89-92 (GFPR), and Gln96. Positions 130–167 (GRLVHPGSGRSYHLEFNPPKVPMKDDVTGEPLIQRSDD) are LID. ATP is bound by residues Arg131 and 140–141 (SY). Residues Arg164 and Arg175 each contribute to the AMP site. Gln203 provides a ligand contact to ATP.

The protein belongs to the adenylate kinase family. AK2 subfamily. As to quaternary structure, monomer.

It is found in the cytoplasm. Its subcellular location is the cytosol. The protein resides in the mitochondrion intermembrane space. The protein localises to the nucleus. It carries out the reaction AMP + ATP = 2 ADP. Catalyzes the reversible transfer of the terminal phosphate group between ATP and AMP. Plays an important role in cellular energy homeostasis and in adenine nucleotide metabolism. Adenylate kinase activity is critical for regulation of the phosphate utilization and the AMP de novo biosynthesis pathways. This chain is Adenylate kinase (adk1), found in Schizosaccharomyces pombe (strain 972 / ATCC 24843) (Fission yeast).